The chain runs to 147 residues: Myoglobin (147 aa).

Alanine 2 is subject to N-acetylalanine. In terms of domain architecture, Globin spans alanine 2 to lysine 141. Histidine 60 serves as a coordination point for nitrite. Histidine 60 is a binding site for O2. Residue histidine 89 participates in heme b binding.

The protein belongs to the globin family. Monomeric.

Its subcellular location is the cytoplasm. The protein resides in the sarcoplasm. It catalyses the reaction Fe(III)-heme b-[protein] + nitric oxide + H2O = Fe(II)-heme b-[protein] + nitrite + 2 H(+). It carries out the reaction H2O2 + AH2 = A + 2 H2O. Its function is as follows. Monomeric heme protein which primary function is to store oxygen and facilitate its diffusion within muscle tissues. Reversibly binds oxygen through a pentacoordinated heme iron and enables its timely and efficient release as needed during periods of heightened demand. Depending on the oxidative conditions of tissues and cells, and in addition to its ability to bind oxygen, it also has a nitrite reductase activity whereby it regulates the production of bioactive nitric oxide. Under stress conditions, like hypoxia and anoxia, it also protects cells against reactive oxygen species thanks to its pseudoperoxidase activity. In Thunnus albacares (Yellowfin tuna), this protein is Myoglobin (mb).